Reading from the N-terminus, the 133-residue chain is Mitochondrial import inner membrane translocase subunit TIM17-3 (133 aa).

4 helical membrane-spanning segments follow: residues 15–35 (IVNAIGYAFGAGAVGGSVYHF), 63–83 (GGTFAVFGGLLSTFDYALVRI), 90–105 (WNSIVAGAATGGVLSI), and 115–128 (SAVMFGFFLAVLNP).

Belongs to the Tim17/Tim22/Tim23 family. In terms of assembly, component of the TIM17:23 complex at least composed of TIM23, TIM17 and TIM50. The complex interacts with the TIM44 component of the PAM complex. As to expression, expressed in cotyledons, roots, flowers and leaves.

Its subcellular location is the mitochondrion inner membrane. In terms of biological role, essential component of the TIM17:23 complex, a complex that mediates the translocation of transit peptide-containing proteins across the mitochondrial inner membrane. Links the inner and outer membranes. This chain is Mitochondrial import inner membrane translocase subunit TIM17-3 (TIM17-3), found in Arabidopsis thaliana (Mouse-ear cress).